We begin with the raw amino-acid sequence, 671 residues long: RNA polymerase sigma factor RpoD (671 aa).

2 disordered regions span residues Met1–Lys45 and Asp229–Lys260. Positions Glu251–Lys260 are enriched in basic and acidic residues. The tract at residues Met436–Thr506 is sigma-70 factor domain-2. The Interaction with polymerase core subunit RpoC signature appears at Asp460–Gln463. The segment at Asp515 to His591 is sigma-70 factor domain-3. The segment at Val604–Ser658 is sigma-70 factor domain-4. Residues Leu631 to Ser650 constitute a DNA-binding region (H-T-H motif).

This sequence belongs to the sigma-70 factor family. RpoD/SigA subfamily. In terms of assembly, interacts transiently with the RNA polymerase catalytic core.

It is found in the cytoplasm. In terms of biological role, sigma factors are initiation factors that promote the attachment of RNA polymerase to specific initiation sites and are then released. This sigma factor is the primary sigma factor during exponential growth. This chain is RNA polymerase sigma factor RpoD, found in Helicobacter pylori (strain ATCC 700392 / 26695) (Campylobacter pylori).